A 349-amino-acid polypeptide reads, in one-letter code: tRNA N6-adenosine threonylcarbamoyltransferase (349 aa).

2 residues coordinate Fe cation: His-118 and His-122. Substrate is bound by residues 141-145 (LVSGG), Asp-174, Gly-187, and Asn-280. Fe cation is bound at residue Asp-308.

This sequence belongs to the KAE1 / TsaD family. Fe(2+) is required as a cofactor.

The protein resides in the cytoplasm. It catalyses the reaction L-threonylcarbamoyladenylate + adenosine(37) in tRNA = N(6)-L-threonylcarbamoyladenosine(37) in tRNA + AMP + H(+). Required for the formation of a threonylcarbamoyl group on adenosine at position 37 (t(6)A37) in tRNAs that read codons beginning with adenine. Is involved in the transfer of the threonylcarbamoyl moiety of threonylcarbamoyl-AMP (TC-AMP) to the N6 group of A37, together with TsaE and TsaB. TsaD likely plays a direct catalytic role in this reaction. This chain is tRNA N6-adenosine threonylcarbamoyltransferase, found in Acidovorax sp. (strain JS42).